The sequence spans 227 residues: 4-nitrobenzoate reductase (227 aa).

15 to 19 provides a ligand contact to FMN; sequence RRAVR. NAD(+) contacts are provided by serine 45, tyrosine 102, and isoleucine 107. Arginine 213 is an FMN binding site.

The protein belongs to the nitroreductase family. It depends on FMN as a cofactor.

The catalysed reaction is 4-nitrobenzoate + 2 NADH + 2 H(+) = 4-hydroxylaminobenzoate + 2 NAD(+) + H2O. In terms of biological role, nitroreductase involved in the degradation of nitroaromatic compounds. Catalyzes the conversion of 4-nitrobenzoate to 4-hydroxylaminobenzoate. Required for the catabolism of 4-nitrotoluene. This is 4-nitrobenzoate reductase from Pseudomonas putida (Arthrobacter siderocapsulatus).